A 325-amino-acid polypeptide reads, in one-letter code: Acetyl-coenzyme A carboxylase carboxyl transferase subunit alpha (325 aa).

A CoA carboxyltransferase C-terminal domain is found at 44-298 (QLEGRAEQLR…KTAILSNLEE (255 aa)).

The protein belongs to the AccA family. As to quaternary structure, acetyl-CoA carboxylase is a heterohexamer composed of biotin carboxyl carrier protein (AccB), biotin carboxylase (AccC) and two subunits each of ACCase subunit alpha (AccA) and ACCase subunit beta (AccD).

It is found in the cytoplasm. It carries out the reaction N(6)-carboxybiotinyl-L-lysyl-[protein] + acetyl-CoA = N(6)-biotinyl-L-lysyl-[protein] + malonyl-CoA. It participates in lipid metabolism; malonyl-CoA biosynthesis; malonyl-CoA from acetyl-CoA: step 1/1. Functionally, component of the acetyl coenzyme A carboxylase (ACC) complex. First, biotin carboxylase catalyzes the carboxylation of biotin on its carrier protein (BCCP) and then the CO(2) group is transferred by the carboxyltransferase to acetyl-CoA to form malonyl-CoA. The protein is Acetyl-coenzyme A carboxylase carboxyl transferase subunit alpha of Acaryochloris marina (strain MBIC 11017).